The sequence spans 253 residues: Cell division protein ZapD (253 aa).

This sequence belongs to the ZapD family. In terms of assembly, interacts with FtsZ.

It localises to the cytoplasm. Cell division factor that enhances FtsZ-ring assembly. Directly interacts with FtsZ and promotes bundling of FtsZ protofilaments, with a reduction in FtsZ GTPase activity. In Bordetella bronchiseptica (strain ATCC BAA-588 / NCTC 13252 / RB50) (Alcaligenes bronchisepticus), this protein is Cell division protein ZapD.